Consider the following 299-residue polypeptide: CRISPR-associated endonuclease Cas1 3 (299 aa).

Residues Glu-143, His-210, and Asp-223 each coordinate Mn(2+).

It belongs to the CRISPR-associated endonuclease Cas1 family. In terms of assembly, homodimer, forms a heterotetramer with a Cas2 homodimer. Mg(2+) serves as cofactor. Requires Mn(2+) as cofactor.

Its function is as follows. CRISPR (clustered regularly interspaced short palindromic repeat), is an adaptive immune system that provides protection against mobile genetic elements (viruses, transposable elements and conjugative plasmids). CRISPR clusters contain spacers, sequences complementary to antecedent mobile elements, and target invading nucleic acids. CRISPR clusters are transcribed and processed into CRISPR RNA (crRNA). Acts as a dsDNA endonuclease. Involved in the integration of spacer DNA into the CRISPR cassette. The polypeptide is CRISPR-associated endonuclease Cas1 3 (Methanospirillum hungatei JF-1 (strain ATCC 27890 / DSM 864 / NBRC 100397 / JF-1)).